The primary structure comprises 249 residues: Enolase-phosphatase E1 (249 aa).

The protein belongs to the HAD-like hydrolase superfamily. MasA/MtnC family. In terms of assembly, monomer. Mg(2+) is required as a cofactor.

It carries out the reaction 5-methylsulfanyl-2,3-dioxopentyl phosphate + H2O = 1,2-dihydroxy-5-(methylsulfanyl)pent-1-en-3-one + phosphate. Its pathway is amino-acid biosynthesis; L-methionine biosynthesis via salvage pathway; L-methionine from S-methyl-5-thio-alpha-D-ribose 1-phosphate: step 3/6. The protein operates within amino-acid biosynthesis; L-methionine biosynthesis via salvage pathway; L-methionine from S-methyl-5-thio-alpha-D-ribose 1-phosphate: step 4/6. Functionally, bifunctional enzyme that catalyzes the enolization of 2,3-diketo-5-methylthiopentyl-1-phosphate (DK-MTP-1-P) into the intermediate 2-hydroxy-3-keto-5-methylthiopentenyl-1-phosphate (HK-MTPenyl-1-P), which is then dephosphorylated to form the acireductone 1,2-dihydroxy-3-keto-5-methylthiopentene (DHK-MTPene). In Synechococcus sp. (strain RCC307), this protein is Enolase-phosphatase E1.